Here is an 85-residue protein sequence, read N- to C-terminus: Small ribosomal subunit protein uS17 (85 aa).

This sequence belongs to the universal ribosomal protein uS17 family. In terms of assembly, part of the 30S ribosomal subunit.

One of the primary rRNA binding proteins, it binds specifically to the 5'-end of 16S ribosomal RNA. This is Small ribosomal subunit protein uS17 from Mycoplasmoides gallisepticum (strain R(low / passage 15 / clone 2)) (Mycoplasma gallisepticum).